The sequence spans 462 residues: Glycine--tRNA ligase (462 aa).

Residues Arg-100 and Glu-174 each coordinate substrate. ATP is bound by residues 206–208 (RNE), 216–221 (FRTREF), 290–291 (EL), and 334–337 (GADR). Residue 221-225 (FEQME) participates in substrate binding. Substrate is bound at residue 330–334 (EPSLG).

This sequence belongs to the class-II aminoacyl-tRNA synthetase family. As to quaternary structure, homodimer.

Its subcellular location is the cytoplasm. It catalyses the reaction tRNA(Gly) + glycine + ATP = glycyl-tRNA(Gly) + AMP + diphosphate. In terms of biological role, catalyzes the attachment of glycine to tRNA(Gly). This Alkaliphilus metalliredigens (strain QYMF) protein is Glycine--tRNA ligase.